We begin with the raw amino-acid sequence, 532 residues long: Putative cysteine desulfurase PbSufS (532 aa).

A signal peptide spans 1–18; the sequence is MNNESICILLLLFVKITS. K286 is modified (N6-(pyridoxal phosphate)lysine). C480 functions as the Cysteine persulfide intermediate in the catalytic mechanism.

This sequence belongs to the class-V pyridoxal-phosphate-dependent aminotransferase family. Csd subfamily. As to quaternary structure, monomer. Interacts with SufE; interaction enhances cysteine desulfurase activity of SufS. Pyridoxal 5'-phosphate is required as a cofactor.

The protein resides in the plastid. The protein localises to the apicoplast. It carries out the reaction (sulfur carrier)-H + L-cysteine = (sulfur carrier)-SH + L-alanine. It functions in the pathway cofactor biosynthesis; iron-sulfur cluster biosynthesis. Catalyzes sulfur activation and mobilization in sulfur mobilization (SUF) pathway for iron-sulfur (Fe-S) cluster biogenesis. Active when in complex with a partner protein SufE. Required for apicoplast maintenance. Plays a role in the development of sporozoites in oocysts in mosquitoes. The chain is Putative cysteine desulfurase PbSufS from Plasmodium berghei (strain Anka).